A 501-amino-acid polypeptide reads, in one-letter code: MAEHFTDEEIWFVTGSQSLYGQEILDQVAEQSRALAERLDASADLPVAVRWKPVVTTSEAILDVLRDASSSPQCVGVITWMHTFSPAKMWIRGLSALQKPMLHLHTQFGVEIPWDTIDMDFMNLNQAAHGDREFGYIQTRLSVPRTTVAGHVGDPRTTARIGSWMRAALGAAELRSLRIARFGDNMRDVAVTEGDKVEAESHFGVSVNTYSVNDLAKAVYDVSDPEIDKLVQEYEDTYAVAEELRRGGERHASLREGARIELGLRHFLADGFGAFTTNFEDLGDLRQLPGLAVQRLMADGFGFGAEGDWKTSAMVRTVKTMGVGLPGGTSFMEDYTYDLTPGSERILGAHMLEVCPSIAGQTPSLEVHPLGIGNREDPVRLRFTAAPGSGVVLGICDMGSRFRLVANHVTVVEPSAPLPNLPVACAVWEPEPSWSTSTEAWLMAGGPHHTVLTTAVSPTTLDDFATITGTELLQIDQHTTPREFQREMRWNAVYHHIAAGL.

4 residues coordinate Mn(2+): Glu-306, Glu-333, His-350, and His-449.

Belongs to the arabinose isomerase family. It depends on Mn(2+) as a cofactor.

The enzyme catalyses beta-L-arabinopyranose = L-ribulose. It functions in the pathway carbohydrate degradation; L-arabinose degradation via L-ribulose; D-xylulose 5-phosphate from L-arabinose (bacterial route): step 1/3. Its function is as follows. Catalyzes the conversion of L-arabinose to L-ribulose. This is L-arabinose isomerase from Mycolicibacterium smegmatis (strain ATCC 700084 / mc(2)155) (Mycobacterium smegmatis).